Here is a 304-residue protein sequence, read N- to C-terminus: DCN1-like protein 3 (304 aa).

Disordered regions lie at residues 1–86 and 284–304; these read MGQC…AEES and EGEGRGALSSGPEGLCPEEQT. Gly-2 carries the N-myristoyl glycine lipid modification. The DCUN1 domain maps to 86–278; it reads SSLQRLEELF…LFDTFVEWEM (193 aa).

As to quaternary structure, part of a complex containing DCUN1D3, CUL3 and RBX1. Interacts (via the DCUN1 domain) with the unneddylated cullins: interacts with CUL1, CUL2, CUL3, CUL4A, CUL4B and CUL5; these interactions promote the cullin neddylation and the identity of the cullin dictates the affinity of the interaction. Interacts preferentially with CUL3; this interaction triggers the relocalization of CUL3 to the cell membrane where CUL3 is neddylated. Interacts (via DCUN1 domain) with RBX1. May also interact with regulators or subunits of cullin-RING ligases such as RNF7, ELOB and DDB1; these interactions are bridged by cullins. Interacts (via DCUN1 domain) with CAND1; this interaction is bridged by cullins and strongly inhibits cullin neddylation. These CAND-cullin-DCNL complexes can only be neddylated in the presence of a substrate adapter. Interacts (via DCUN1 domain) with the N-terminally acetylated form of UBE2M and UBE2F.

The protein localises to the cell membrane. The protein resides in the cytoplasm. Its subcellular location is the nucleus. It localises to the perinuclear region. Contributes to the neddylation of all cullins by transferring NEDD8 from N-terminally acetylated NEDD8-conjugating E2s enzyme to different cullin C-terminal domain-RBX complexes and may play a role in the cell cycle progression by regulating the SCF ubiquitin E3 ligase complex, after UV damage. At the cell membrane, can promote and as well inhibit cullins neddylation. The chain is DCN1-like protein 3 from Pongo abelii (Sumatran orangutan).